We begin with the raw amino-acid sequence, 380 residues long: 3-dehydroquinate synthase (380 aa).

The protein belongs to the archaeal-type DHQ synthase family.

It carries out the reaction 2-amino-2,3,7-trideoxy-D-lyxo-hept-6-ulosonate + NAD(+) + H2O = 3-dehydroquinate + NH4(+) + NADH + H(+). Catalyzes the oxidative deamination and cyclization of 2-amino-3,7-dideoxy-D-threo-hept-6-ulosonic acid (ADH) to yield 3-dehydroquinate (DHQ), which is fed into the canonical shikimic pathway of aromatic amino acid biosynthesis. The chain is 3-dehydroquinate synthase from Methanosarcina acetivorans (strain ATCC 35395 / DSM 2834 / JCM 12185 / C2A).